The chain runs to 171 residues: Small ribosomal subunit protein uS13 (171 aa).

Polar residues predominate over residues 1 to 11 (MAKGSANNVKV). 2 disordered regions span residues 1–24 (MAKGSANNVKVNQDAGKSQPEKKE) and 144–164 (EKGKKVRGQRTRSNGRKGLSI). Residues 144–158 (EKGKKVRGQRTRSNG) are compositionally biased toward basic residues.

The protein belongs to the universal ribosomal protein uS13 family. As to quaternary structure, part of the 30S ribosomal subunit. Forms a loose heterodimer with protein S19. Forms two bridges to the 50S subunit in the 70S ribosome.

Located at the top of the head of the 30S subunit, it contacts several helices of the 16S rRNA. In the 70S ribosome it contacts the 23S rRNA (bridge B1a) and protein L5 of the 50S subunit (bridge B1b), connecting the 2 subunits; these bridges are implicated in subunit movement. The polypeptide is Small ribosomal subunit protein uS13 (Thermoplasma acidophilum (strain ATCC 25905 / DSM 1728 / JCM 9062 / NBRC 15155 / AMRC-C165)).